The following is a 100-amino-acid chain: ATP synthase subunit c (100 aa).

2 consecutive transmembrane segments (helical) span residues 26–46 (FSVV…AIGM) and 71–91 (MFIA…IALI).

The protein belongs to the ATPase C chain family. F-type ATPases have 2 components, F(1) - the catalytic core - and F(0) - the membrane proton channel. F(1) has five subunits: alpha(3), beta(3), gamma(1), delta(1), epsilon(1). F(0) has three main subunits: a(1), b(2) and c(10-14). The alpha and beta chains form an alternating ring which encloses part of the gamma chain. F(1) is attached to F(0) by a central stalk formed by the gamma and epsilon chains, while a peripheral stalk is formed by the delta and b chains.

It localises to the cell inner membrane. In terms of biological role, f(1)F(0) ATP synthase produces ATP from ADP in the presence of a proton or sodium gradient. F-type ATPases consist of two structural domains, F(1) containing the extramembraneous catalytic core and F(0) containing the membrane proton channel, linked together by a central stalk and a peripheral stalk. During catalysis, ATP synthesis in the catalytic domain of F(1) is coupled via a rotary mechanism of the central stalk subunits to proton translocation. Its function is as follows. Key component of the F(0) channel; it plays a direct role in translocation across the membrane. A homomeric c-ring of between 10-14 subunits forms the central stalk rotor element with the F(1) delta and epsilon subunits. The chain is ATP synthase subunit c from Campylobacter fetus subsp. fetus (strain 82-40).